We begin with the raw amino-acid sequence, 213 residues long: 3-isopropylmalate dehydratase small subunit (213 aa).

The protein belongs to the LeuD family. LeuD type 1 subfamily. In terms of assembly, heterodimer of LeuC and LeuD.

The catalysed reaction is (2R,3S)-3-isopropylmalate = (2S)-2-isopropylmalate. It functions in the pathway amino-acid biosynthesis; L-leucine biosynthesis; L-leucine from 3-methyl-2-oxobutanoate: step 2/4. Catalyzes the isomerization between 2-isopropylmalate and 3-isopropylmalate, via the formation of 2-isopropylmaleate. This Neisseria meningitidis serogroup B (strain ATCC BAA-335 / MC58) protein is 3-isopropylmalate dehydratase small subunit.